A 281-amino-acid polypeptide reads, in one-letter code: Homeobox protein Hox-A5 (281 aa).

2 disordered regions span residues 65–144 (VGNE…PCSS) and 162–183 (PLEEEKPAGSAPTTPQNVSDST). Polar residues-rich tracts occupy residues 68-99 (ERTQGYSPSHSAATTPSVEPVRYTQSANSTGT) and 114-127 (VASSSPVTETQSQH). Residues 132–144 (NSITTPCSTPCSS) are compositionally biased toward low complexity. Residues 172–183 (APTTPQNVSDST) show a composition bias toward polar residues. The Antp-type hexapeptide motif lies at 187-192 (IYPWMR). A DNA-binding region (homeobox) is located at residues 205-264 (GKRARTAYTRYQTLELEKEFHFNRYLTRRRRIEIAHALCLSERQIKIWFQNRRMKWKKDN).

The protein belongs to the Antp homeobox family.

It localises to the nucleus. Functionally, sequence-specific transcription factor which is part of a developmental regulatory system that provides cells with specific positional identities on the anterior-posterior axis. The polypeptide is Homeobox protein Hox-A5 (hoxa5) (Morone saxatilis (Striped bass)).